Reading from the N-terminus, the 595-residue chain is Adenine deaminase (595 aa).

The protein belongs to the metallo-dependent hydrolases superfamily. Adenine deaminase family. As to quaternary structure, homodimer. Mn(2+) is required as a cofactor.

The catalysed reaction is adenine + H2O + H(+) = hypoxanthine + NH4(+). The polypeptide is Adenine deaminase (Serratia proteamaculans (strain 568)).